A 366-amino-acid chain; its full sequence is tRNA/tmRNA (uracil-C(5))-methyltransferase (366 aa).

S-adenosyl-L-methionine-binding residues include Gln-190, Tyr-218, Asn-223, Glu-239, and Asp-299. Cys-324 serves as the catalytic Nucleophile. Glu-358 functions as the Proton acceptor in the catalytic mechanism.

It belongs to the class I-like SAM-binding methyltransferase superfamily. RNA M5U methyltransferase family. TrmA subfamily.

The enzyme catalyses uridine(54) in tRNA + S-adenosyl-L-methionine = 5-methyluridine(54) in tRNA + S-adenosyl-L-homocysteine + H(+). It carries out the reaction uridine(341) in tmRNA + S-adenosyl-L-methionine = 5-methyluridine(341) in tmRNA + S-adenosyl-L-homocysteine + H(+). Its function is as follows. Dual-specificity methyltransferase that catalyzes the formation of 5-methyluridine at position 54 (m5U54) in all tRNAs, and that of position 341 (m5U341) in tmRNA (transfer-mRNA). In Salmonella agona (strain SL483), this protein is tRNA/tmRNA (uracil-C(5))-methyltransferase.